Consider the following 401-residue polypeptide: Leucine aminopeptidase 1 (401 aa).

The first 18 residues, 1-18 (MKVAKASLLTILAHSVSA), serve as a signal peptide directing secretion. Positions 19 to 87 (RFLAEDEINR…GATRLRTKTK (69 aa)) are excised as a propeptide. N-linked (GlcNAc...) asparagine glycosylation occurs at Asn179. Residues His187, Asp206, Glu245, and Asp272 each contribute to the Zn(2+) site. An intrachain disulfide couples Cys321 to Cys325. His354 lines the Zn(2+) pocket.

This sequence belongs to the peptidase M28 family. M28E subfamily. As to quaternary structure, monomer. The cofactor is Zn(2+).

The protein localises to the secreted. Extracellular aminopeptidase that allows assimilation of proteinaceous substrates. In Colletotrichum graminicola (strain M1.001 / M2 / FGSC 10212) (Maize anthracnose fungus), this protein is Leucine aminopeptidase 1 (LAP1).